Consider the following 72-residue polypeptide: Cytochrome b-c1 complex subunit 8 (72 aa).

At 2-41 the chain is on the mitochondrial matrix side; sequence GKQPVKLKAVVYAISPFQQKIMPGLWKDLPGKIHHKVSEN. The helical transmembrane segment at 42–59 threads the bilayer; the sequence is WISATLLLGPLVGTYSYV. The Mitochondrial intermembrane segment spans residues 60–72; that stretch reads QHFLEKEKLEHRY.

The protein belongs to the UQCRQ/QCR8 family. In terms of assembly, component of the ubiquinol-cytochrome c oxidoreductase (cytochrome b-c1 complex, complex III, CIII), a multisubunit enzyme composed of 3 respiratory subunits cytochrome b, cytochrome c1 and Rieske protein, 2 core protein subunits, and additional low-molecular weight protein subunits. The complex exists as an obligatory dimer and forms supercomplexes (SCs) in the inner mitochondrial membrane with cytochrome c oxidase (complex IV, CIV).

It localises to the mitochondrion inner membrane. Its function is as follows. Component of the ubiquinol-cytochrome c oxidoreductase, a multisubunit transmembrane complex that is part of the mitochondrial electron transport chain which drives oxidative phosphorylation. The respiratory chain contains 3 multisubunit complexes succinate dehydrogenase (complex II, CII), ubiquinol-cytochrome c oxidoreductase (cytochrome b-c1 complex, complex III, CIII) and cytochrome c oxidase (complex IV, CIV), that cooperate to transfer electrons derived from NADH and succinate to molecular oxygen, creating an electrochemical gradient over the inner membrane that drives transmembrane transport and the ATP synthase. The cytochrome b-c1 complex catalyzes electron transfer from ubiquinol to cytochrome c, linking this redox reaction to translocation of protons across the mitochondrial inner membrane, with protons being carried across the membrane as hydrogens on the quinol. In the process called Q cycle, 2 protons are consumed from the matrix, 4 protons are released into the intermembrane space and 2 electrons are passed to cytochrome c. This Solanum tuberosum (Potato) protein is Cytochrome b-c1 complex subunit 8.